Consider the following 123-residue polypeptide: Small ribosomal subunit protein uS12 (123 aa).

Asp-89 carries the 3-methylthioaspartic acid modification. The disordered stretch occupies residues 100-123 (GSLDTSGVSDRKQGRSKYGTKRPK). The span at 113–123 (GRSKYGTKRPK) shows a compositional bias: basic residues.

This sequence belongs to the universal ribosomal protein uS12 family. As to quaternary structure, part of the 30S ribosomal subunit. Contacts proteins S8 and S17. May interact with IF1 in the 30S initiation complex.

Its function is as follows. With S4 and S5 plays an important role in translational accuracy. Functionally, interacts with and stabilizes bases of the 16S rRNA that are involved in tRNA selection in the A site and with the mRNA backbone. Located at the interface of the 30S and 50S subunits, it traverses the body of the 30S subunit contacting proteins on the other side and probably holding the rRNA structure together. The combined cluster of proteins S8, S12 and S17 appears to hold together the shoulder and platform of the 30S subunit. This Saccharophagus degradans (strain 2-40 / ATCC 43961 / DSM 17024) protein is Small ribosomal subunit protein uS12.